Here is a 675-residue protein sequence, read N- to C-terminus: Serine/threonine-protein kinase ATG1 (675 aa).

In terms of domain architecture, Protein kinase spans 25-328 (FVIGGEIGKG…FEDFFNDPVV (304 aa)). ATP is bound by residues 31 to 39 (IGKGSFAQV) and K54. The active-site Proton acceptor is D168. A compositionally biased stretch (basic and acidic residues) spans 339–374 (DIPKVEQKPSRDLRSLEADPQREQSELAKSPRERPL). Disordered regions lie at residues 339–455 (DIPK…ERKL) and 501–577 (RLTS…TTRS). Composition is skewed to polar residues over residues 390–399 (ANVSARTGQS), 516–538 (ATQQ…SAVQ), and 556–565 (ASRSLNTSSA).

It belongs to the protein kinase superfamily. Ser/Thr protein kinase family. APG1/unc-51/ULK1 subfamily. As to quaternary structure, homodimer. Forms a ternary complex with ATG13 and ATG17.

The protein resides in the cytoplasm. It is found in the preautophagosomal structure membrane. It catalyses the reaction L-seryl-[protein] + ATP = O-phospho-L-seryl-[protein] + ADP + H(+). The enzyme catalyses L-threonyl-[protein] + ATP = O-phospho-L-threonyl-[protein] + ADP + H(+). Serine/threonine protein kinase involved in the cytoplasm to vacuole transport (Cvt) and found to be essential in autophagy, where it is required for the formation of autophagosomes. Involved in the clearance of protein aggregates which cannot be efficiently cleared by the proteasome. Required for selective autophagic degradation of the nucleus (nucleophagy) as well as for mitophagy which contributes to regulate mitochondrial quantity and quality by eliminating the mitochondria to a basal level to fulfill cellular energy requirements and preventing excess ROS production. Also involved in endoplasmic reticulum-specific autophagic process, in selective removal of ER-associated degradation (ERAD) substrates. Plays a key role in ATG9 and ATG23 cycling through the pre-autophagosomal structure and is necessary to promote ATG18 binding to ATG9 through phosphorylation of ATG9. Catalyzes phosphorylation of ATG4, decreasing the interaction between ATG4 and ATG8 and impairing deconjugation of PE-conjugated forms of ATG8. This is Serine/threonine-protein kinase ATG1 from Colletotrichum lindemuthianum (Bean anthracnose fungus).